Here is a 589-residue protein sequence, read N- to C-terminus: MMRSHYCGTLNRSHVGQAVTLSGWVHRIRNLGRFIFMQIRDREGIVQVFFDEKDDTLFKVASQLRAEACVQIQGQVIARDEAQINPEMATGEIEVLVQNVLVYNNAEVLPLDFNQNNTEEQRLKYRYLDLRRHKMAENLKTRAKITSFVRRYMDEHGFLDIETPMLTKATPEGARDYLVPSRVHKGKFYALPQSPQLFKQLLMMSGFDRYYQIVKCFRDEDLRADRQPEFTQIDVETSFLTAEEVRALMENMIHSLWLDRLNVDLGKFPIMSWQEAMQHFGSDKPDLRNPLELVDIADIVKNVEFNVFNEPANAIDGRVTVLRVPNGATLTRKQIDEYTQFVAIYGAKGLAWAKINDINAGMDGIQSPVAKFLNAEIFNALIERTAAQNGDILFFGADKWQVVTDAMGALRLKIGRDLALTDQTAWKPLWVIDFPMFERDGEGNLSAMHHPFTAPKDLSPDQLAADPIKAVANAYDMVINGYEVGGGSVRIFDPKMQQTVFNILGINEQDQQEKFGFLLDALKFGTPPHAGLAFGLDRLTMLITGTENIRDVIAFPKTTAAACLMTEAPSYANPQVLQELAIQTTVETE.

E172 serves as a coordination point for L-aspartate. Residues 196 to 199 form an aspartate region; that stretch reads QLFK. Residue R218 coordinates L-aspartate. Residues 218 to 220 and Q227 each bind ATP; that span reads RDE. Position 449 (H449) interacts with L-aspartate. E483 serves as a coordination point for ATP. R490 provides a ligand contact to L-aspartate. An ATP-binding site is contributed by 535–538; that stretch reads GLDR.

Belongs to the class-II aminoacyl-tRNA synthetase family. Type 1 subfamily. Homodimer.

The protein resides in the cytoplasm. It carries out the reaction tRNA(Asp) + L-aspartate + ATP = L-aspartyl-tRNA(Asp) + AMP + diphosphate. Catalyzes the attachment of L-aspartate to tRNA(Asp) in a two-step reaction: L-aspartate is first activated by ATP to form Asp-AMP and then transferred to the acceptor end of tRNA(Asp). In Haemophilus ducreyi (strain 35000HP / ATCC 700724), this protein is Aspartate--tRNA ligase.